The chain runs to 173 residues: Oleosin 18.5 kDa (173 aa).

The tract at residues 1-45 (MADTARGTHHDIIGRDQYPMMGRDRDQYQMSGRGSDYSKSRQIAK) is polar. A hydrophobic region spans residues 46-117 (AATAVTAGGS…AAITVFSWIY (72 aa)). 3 consecutive transmembrane segments (helical) span residues 54–74 (GSLL…LTVA), 76–96 (PLLV…ALLI), and 97–117 (TGFL…SWIY). The segment at 151 to 173 (YYGQQHTGGEHDRDRTRGGQHTT) is disordered. Residues 158-167 (GGEHDRDRTR) show a composition bias toward basic and acidic residues.

It belongs to the oleosin family.

The protein localises to the lipid droplet. Its subcellular location is the membrane. May have a structural role to stabilize the lipid body during desiccation of the seed by preventing coalescence of the oil. Probably interacts with both lipid and phospholipid moieties of lipid bodies. May also provide recognition signals for specific lipase anchorage in lipolysis during seedling growth. This is Oleosin 18.5 kDa from Arabidopsis thaliana (Mouse-ear cress).